The chain runs to 516 residues: Delta(24)-sterol reductase (516 aa).

Residues 1–22 form the signal peptide; the sequence is MEPAVSLAVCALLFLLWVRVKG. The Lumenal portion of the chain corresponds to 23–31; the sequence is LEFVLIHQR. A helical membrane pass occupies residues 32-52; the sequence is WVFVCLFLLPLSLIFDIYYYV. Over 53-516 the chain is Cytoplasmic; that stretch reads RAWVVFKLSS…YDKICKAARH (464 aa). The FAD-binding PCMH-type domain maps to 58–234; the sequence is FKLSSAPRLH…VAAEIRIIPA (177 aa). 163-175 contributes to the FAD binding site; that stretch reads TVGGLIMGTGIES.

The protein belongs to the FAD-binding oxidoreductase/transferase type 4 family. The cofactor is FAD.

It is found in the endoplasmic reticulum membrane. The protein resides in the golgi apparatus membrane. It carries out the reaction 5alpha-cholest-8-en-3beta-ol + NADP(+) = zymosterol + NADPH + H(+). The enzyme catalyses cholesterol + NADP(+) = desmosterol + NADPH + H(+). The catalysed reaction is lanosterol + NADPH + H(+) = 24,25-dihydrolanosterol + NADP(+). The protein operates within steroid biosynthesis; cholesterol biosynthesis. Functionally, catalyzes the reduction of the delta-24 double bond of sterol intermediates during cholesterol biosynthesis. In addition to its cholesterol-synthesizing activity, can protect cells from oxidative stress by reducing caspase 3 activity during apoptosis induced by oxidative stress. Also protects against amyloid-beta peptide-induced apoptosis. In Mus musculus (Mouse), this protein is Delta(24)-sterol reductase (Dhcr24).